We begin with the raw amino-acid sequence, 886 residues long: DNA gyrase subunit A (886 aa).

Residues 35–501 (LPDVRDGLKP…GFEDLEDEDL (467 aa)) enclose the Topo IIA-type catalytic domain. The active-site O-(5'-phospho-DNA)-tyrosine intermediate is Tyr123. Residues 528–534 (QNRGGRG) carry the GyrA-box motif. Residues 810–860 (VKEDADEENEDEQSTVSEDGTEQQREAVVNDETPGNAIHTEVIDSEVNDED) are disordered. A compositionally biased stretch (acidic residues) spans 813–822 (DADEENEDEQ).

Belongs to the type II topoisomerase GyrA/ParC subunit family. Heterotetramer, composed of two GyrA and two GyrB chains. In the heterotetramer, GyrA contains the active site tyrosine that forms a transient covalent intermediate with DNA, while GyrB binds cofactors and catalyzes ATP hydrolysis.

The protein resides in the cytoplasm. It catalyses the reaction ATP-dependent breakage, passage and rejoining of double-stranded DNA.. Functionally, a type II topoisomerase that negatively supercoils closed circular double-stranded (ds) DNA in an ATP-dependent manner to modulate DNA topology and maintain chromosomes in an underwound state. Negative supercoiling favors strand separation, and DNA replication, transcription, recombination and repair, all of which involve strand separation. Also able to catalyze the interconversion of other topological isomers of dsDNA rings, including catenanes and knotted rings. Type II topoisomerases break and join 2 DNA strands simultaneously in an ATP-dependent manner. The polypeptide is DNA gyrase subunit A (Staphylococcus aureus (strain MRSA252)).